The chain runs to 364 residues: Dihydroorotate dehydrogenase (quinone) (364 aa).

Residues 62–66 (AGFDK) and Thr86 contribute to the FMN site. Lys66 is a substrate binding site. 111 to 115 (NRMGF) provides a ligand contact to substrate. FMN is bound by residues Asn142 and Asn175. Asn175 lines the substrate pocket. The active-site Nucleophile is Ser178. Asn180 contacts substrate. The FMN site is built by Lys216 and Thr244. Residue 245–246 (NT) coordinates substrate. Residues Gly267, Gly296, and 317–318 (YT) each bind FMN.

This sequence belongs to the dihydroorotate dehydrogenase family. Type 2 subfamily. As to quaternary structure, monomer. Requires FMN as cofactor.

It is found in the cell membrane. It carries out the reaction (S)-dihydroorotate + a quinone = orotate + a quinol. It functions in the pathway pyrimidine metabolism; UMP biosynthesis via de novo pathway; orotate from (S)-dihydroorotate (quinone route): step 1/1. Catalyzes the conversion of dihydroorotate to orotate with quinone as electron acceptor. This chain is Dihydroorotate dehydrogenase (quinone), found in Anaeromyxobacter dehalogenans (strain 2CP-C).